The primary structure comprises 446 residues: Aspartokinase (446 aa).

The RPE1 insert domain occupies Ile-250–Tyr-294.

It belongs to the aspartokinase family.

It carries out the reaction L-aspartate + ATP = 4-phospho-L-aspartate + ADP. Its pathway is amino-acid biosynthesis; L-lysine biosynthesis via DAP pathway; (S)-tetrahydrodipicolinate from L-aspartate: step 1/4. It functions in the pathway amino-acid biosynthesis; L-methionine biosynthesis via de novo pathway; L-homoserine from L-aspartate: step 1/3. The protein operates within amino-acid biosynthesis; L-threonine biosynthesis; L-threonine from L-aspartate: step 1/5. This Rickettsia prowazekii (strain Madrid E) protein is Aspartokinase (lysC).